The primary structure comprises 423 residues: UPF0229 protein VV2350 (423 aa).

Residues 81–111 are disordered; that stretch reads QFITGDKIERPKGGQGGGGAGDGDASADGEG. Gly residues predominate over residues 93–102; the sequence is GGQGGGGAGD.

Belongs to the UPF0229 family.

The sequence is that of UPF0229 protein VV2350 from Vibrio vulnificus (strain YJ016).